A 204-amino-acid polypeptide reads, in one-letter code: Small ribosomal subunit protein uS7 (204 aa).

The protein belongs to the universal ribosomal protein uS7 family. Part of the 30S ribosomal subunit.

One of the primary rRNA binding proteins, it binds directly to 16S rRNA where it nucleates assembly of the head domain of the 30S subunit. Is located at the subunit interface close to the decoding center. The sequence is that of Small ribosomal subunit protein uS7 from Methanoregula boonei (strain DSM 21154 / JCM 14090 / 6A8).